A 452-amino-acid polypeptide reads, in one-letter code: Bifunctional protein GlmU (452 aa).

Positions Met1–Lys226 are pyrophosphorylase. UDP-N-acetyl-alpha-D-glucosamine contacts are provided by residues Leu9–Gly12, Lys23, Gln73, Gly78–Thr79, Tyr100–Asp102, Gly137, Glu151, Asn166, and Asn224. Asp102 lines the Mg(2+) pocket. Asn224 is a binding site for Mg(2+). Residues Val227–Gln247 form a linker region. The tract at residues Gly248–Lys452 is N-acetyltransferase. Residues Arg330 and Lys348 each coordinate UDP-N-acetyl-alpha-D-glucosamine. Catalysis depends on His360, which acts as the Proton acceptor. The UDP-N-acetyl-alpha-D-glucosamine site is built by Tyr363 and Asn374. Residues Ala377, Asn383–Tyr384, Ser402, Ala420, and Arg437 each bind acetyl-CoA.

It in the N-terminal section; belongs to the N-acetylglucosamine-1-phosphate uridyltransferase family. The protein in the C-terminal section; belongs to the transferase hexapeptide repeat family. Homotrimer. It depends on Mg(2+) as a cofactor.

The protein localises to the cytoplasm. The catalysed reaction is alpha-D-glucosamine 1-phosphate + acetyl-CoA = N-acetyl-alpha-D-glucosamine 1-phosphate + CoA + H(+). It carries out the reaction N-acetyl-alpha-D-glucosamine 1-phosphate + UTP + H(+) = UDP-N-acetyl-alpha-D-glucosamine + diphosphate. It functions in the pathway nucleotide-sugar biosynthesis; UDP-N-acetyl-alpha-D-glucosamine biosynthesis; N-acetyl-alpha-D-glucosamine 1-phosphate from alpha-D-glucosamine 6-phosphate (route II): step 2/2. The protein operates within nucleotide-sugar biosynthesis; UDP-N-acetyl-alpha-D-glucosamine biosynthesis; UDP-N-acetyl-alpha-D-glucosamine from N-acetyl-alpha-D-glucosamine 1-phosphate: step 1/1. It participates in bacterial outer membrane biogenesis; LPS lipid A biosynthesis. Functionally, catalyzes the last two sequential reactions in the de novo biosynthetic pathway for UDP-N-acetylglucosamine (UDP-GlcNAc). The C-terminal domain catalyzes the transfer of acetyl group from acetyl coenzyme A to glucosamine-1-phosphate (GlcN-1-P) to produce N-acetylglucosamine-1-phosphate (GlcNAc-1-P), which is converted into UDP-GlcNAc by the transfer of uridine 5-monophosphate (from uridine 5-triphosphate), a reaction catalyzed by the N-terminal domain. This Ruthia magnifica subsp. Calyptogena magnifica protein is Bifunctional protein GlmU.